The sequence spans 135 residues: T-cell receptor gamma chain V region 5/10-13 (135 aa).

Residues 1 to 18 (MLLLRWPTFCCLWVFGLG) form the signal peptide. The v segment stretch occupies residues 19–114 (QLEQTELSVT…DEATYYCAVC (96 aa)). The interval 115 to 135 (RSGTSWVKIFAKGTKLVVIPP) is j segment.

This is T-cell receptor gamma chain V region 5/10-13 (Tcrg-V1) from Mus musculus (Mouse).